A 203-amino-acid chain; its full sequence is MFEGPVQDLIDELGKLPGIGPKSAQRIAFHLLSVEPPDIDRLTAVLNRIRDGVKFCEVCGNVSDADRCRICSDPRRDASLVCVVEEPKDVQAVERTREFRGRYHVLGGALDPLSGVGPDQLRIRELLNRIGERVDGVDVAEVIIATDPNTEGEATATYLVRMLRDIPGLTVTRIASGLPMGGDLEFADELTLGRALAGRRAMA.

The C4-type zinc finger occupies 56–71; sequence CEVCGNVSDADRCRIC. The Toprim domain maps to 79-179; it reads SLVCVVEEPK…TVTRIASGLP (101 aa).

It belongs to the RecR family.

In terms of biological role, may play a role in DNA repair. It seems to be involved in an RecBC-independent recombinational process of DNA repair. It may act with RecF and RecO. This chain is Recombination protein RecR, found in Mycobacterium sp. (strain JLS).